A 508-amino-acid polypeptide reads, in one-letter code: Photosystem II CP47 reaction center protein (508 aa).

6 helical membrane passes run 21–36 (SVHIMHTALVAGWAGS), 101–115 (IVFSGLCFLAAIWHW), 140–156 (GIHLFLSGVACFGFGAF), 203–218 (IAAGTLGILAGLFHLS), 237–252 (VLSSSIAAVFFAAFVV), and 457–472 (SFALLFFFGHIWHGSR).

Belongs to the PsbB/PsbC family. PsbB subfamily. PSII is composed of 1 copy each of membrane proteins PsbA, PsbB, PsbC, PsbD, PsbE, PsbF, PsbH, PsbI, PsbJ, PsbK, PsbL, PsbM, PsbT, PsbX, PsbY, PsbZ, Psb30/Ycf12, at least 3 peripheral proteins of the oxygen-evolving complex and a large number of cofactors. It forms dimeric complexes. Requires Binds multiple chlorophylls. PSII binds additional chlorophylls, carotenoids and specific lipids. as cofactor.

Its subcellular location is the plastid. The protein resides in the chloroplast thylakoid membrane. Functionally, one of the components of the core complex of photosystem II (PSII). It binds chlorophyll and helps catalyze the primary light-induced photochemical processes of PSII. PSII is a light-driven water:plastoquinone oxidoreductase, using light energy to abstract electrons from H(2)O, generating O(2) and a proton gradient subsequently used for ATP formation. This is Photosystem II CP47 reaction center protein from Fagopyrum esculentum subsp. ancestrale (Wild buckwheat).